We begin with the raw amino-acid sequence, 547 residues long: Chaperonin GroEL (547 aa).

ATP contacts are provided by residues 30–33 (TLGP), lysine 51, 87–91 (DGTTT), glycine 415, 479–481 (NAA), and aspartate 495.

It belongs to the chaperonin (HSP60) family. Forms a cylinder of 14 subunits composed of two heptameric rings stacked back-to-back. Interacts with the co-chaperonin GroES.

The protein localises to the cytoplasm. The enzyme catalyses ATP + H2O + a folded polypeptide = ADP + phosphate + an unfolded polypeptide.. In terms of biological role, together with its co-chaperonin GroES, plays an essential role in assisting protein folding. The GroEL-GroES system forms a nano-cage that allows encapsulation of the non-native substrate proteins and provides a physical environment optimized to promote and accelerate protein folding. The sequence is that of Chaperonin GroEL from Polynucleobacter necessarius subsp. necessarius (strain STIR1).